A 160-amino-acid chain; its full sequence is Ribosomal RNA large subunit methyltransferase H (160 aa).

Residues Leu76 and Gly108 each coordinate S-adenosyl-L-methionine.

Belongs to the RNA methyltransferase RlmH family. Homodimer.

The protein localises to the cytoplasm. It catalyses the reaction pseudouridine(1915) in 23S rRNA + S-adenosyl-L-methionine = N(3)-methylpseudouridine(1915) in 23S rRNA + S-adenosyl-L-homocysteine + H(+). Functionally, specifically methylates the pseudouridine at position 1915 (m3Psi1915) in 23S rRNA. The polypeptide is Ribosomal RNA large subunit methyltransferase H (Xanthobacter autotrophicus (strain ATCC BAA-1158 / Py2)).